The chain runs to 1135 residues: Vinculin (1135 aa).

The tract at residues 2 to 835 (PVFHTRTIES…GAVAKVREAF (834 aa)) is N-terminal globular head. The residue at position 100 (Y100) is a Phosphotyrosine. The segment at 168–208 (MTKMAKMIDERQQELTHQEHRVMLVNSMNTVKELLPVLISA) is talin-interaction. 3 consecutive repeat copies span residues 259–369 (ASKD…KVEN), 370–479 (AARK…KTNR), and 480–589 (AVAN…RMQE). Residues 259–589 (ASKDTEAMKR…LKDLKARMQE (331 aa)) are 3 X 112 AA tandem repeats. 2 positions are modified to phosphotyrosine: Y537 and Y822. Residues 836–878 (QPQEPDFPPPPPDLEHLHLTDELAPPKPPLPEGEVPPPRPPPP) form a linker (Pro-rich) region. A disordered region spans residues 837–888 (PQEPDFPPPPPDLEHLHLTDELAPPKPPLPEGEVPPPRPPPPEEKDEEFPEQ). The span at 860–876 (PPKPPLPEGEVPPPRPP) shows a compositional bias: pro residues. The segment at 879-1135 (EEKDEEFPEQ…RWVRKTPWYQ (257 aa)) is C-terminal tail. Facilitates phospholipid membrane insertion regions lie at residues 1004–1047 (RLVR…KRIR) and 1121–1135 (AGFT…PWYQ). Phosphotyrosine; by SRC-type Tyr-kinases is present on Y1134.

This sequence belongs to the vinculin/alpha-catenin family. In terms of assembly, exhibits self-association properties. Interacts with APBB1IP, NRAP and TLN1. Interacts with CTNNB1 and this interaction is necessary for its localization to the cell-cell junctions and for its function in regulating cell surface expression of E-cadherin. Phosphorylated; on serines, threonines and tyrosines. Phosphorylation on Tyr-1134 in activated platelets affects head-tail interactions and cell spreading but has no effect on actin binding nor on localization to focal adhesion plaques. Post-translationally, acetylated; mainly by myristic acid but also by a small amount of palmitic acid. As to expression, isoform Metavinculin is muscle-specific.

Its subcellular location is the cell membrane. The protein localises to the cell junction. It localises to the adherens junction. The protein resides in the focal adhesion. It is found in the cytoplasm. Its subcellular location is the cytoskeleton. The protein localises to the sarcolemma. It localises to the cell projection. The protein resides in the podosome. Actin filament (F-actin)-binding protein involved in cell-matrix adhesion and cell-cell adhesion. Regulates cell-surface E-cadherin expression and potentiates mechanosensing by the E-cadherin complex. May also play important roles in cell morphology and locomotion. This chain is Vinculin (VCL), found in Gallus gallus (Chicken).